We begin with the raw amino-acid sequence, 349 residues long: Polyamine aminopropyltransferase 2 (349 aa).

Residues 29–267 form the PABS domain; it reads DGAITAIEDS…SSWGFLLASD (239 aa). An S-methyl-5'-thioadenosine-binding site is contributed by Q60. Residues H91 and E115 each contribute to the spermidine site. Residues D135 and 167–168 each bind S-methyl-5'-thioadenosine; that span reads DG. D185 functions as the Proton acceptor in the catalytic mechanism. Position 194 (P194) interacts with S-methyl-5'-thioadenosine.

This sequence belongs to the spermidine/spermine synthase family. In terms of assembly, homodimer or homotetramer.

The protein localises to the cytoplasm. It carries out the reaction S-adenosyl 3-(methylsulfanyl)propylamine + putrescine = S-methyl-5'-thioadenosine + spermidine + H(+). It functions in the pathway amine and polyamine biosynthesis; spermidine biosynthesis; spermidine from putrescine: step 1/1. Functionally, catalyzes the irreversible transfer of a propylamine group from the amino donor S-adenosylmethioninamine (decarboxy-AdoMet) to putrescine (1,4-diaminobutane) to yield spermidine. The sequence is that of Polyamine aminopropyltransferase 2 from Pseudomonas aeruginosa (strain ATCC 15692 / DSM 22644 / CIP 104116 / JCM 14847 / LMG 12228 / 1C / PRS 101 / PAO1).